Consider the following 383-residue polypeptide: D-aspartate oxidase 3 (383 aa).

The first 17 residues, 1–17 (MLYALLLLFGGVSTVSS), serve as a signal peptide directing secretion. FAD-binding residues include lysine 56 and serine 63. 3 N-linked (GlcNAc...) asparagine glycosylation sites follow: asparagine 152, asparagine 271, and asparagine 320. FAD is bound at residue threonine 339. Asparagine 371 carries N-linked (GlcNAc...) asparagine glycosylation.

This sequence belongs to the DAMOX/DASOX family. FAD serves as cofactor. As to expression, in both sexes, present in coelomocytes (at protein level). Expressed in hypodermal cells and the proximal gonadal sheath cells in adult hermaphrodites (at protein level). Also expressed in probable head mesodermal cells and unidentified cells in the head, and vulval muscles in adult hermaphrodites. Expressed in the seminal vesicle, spicule and tail cells in adult males (at protein level).

The protein resides in the secreted. It catalyses the reaction D-aspartate + O2 + H2O = oxaloacetate + H2O2 + NH4(+). The catalysed reaction is D-glutamate + O2 + H2O = H2O2 + 2-oxoglutarate + NH4(+). In terms of biological role, selectively catalyzes the oxidative deamination of acidic amino acids. Plays a role in the egg-laying events and maturation processes of the reproductive organs. The chain is D-aspartate oxidase 3 (ddo-3) from Caenorhabditis elegans.